The primary structure comprises 158 residues: UPF0735 ACT domain-containing protein Bsph_3944 (158 aa).

Residues 80–155 (TVFLQLQDRK…FVESAEVISS (76 aa)) enclose the ACT domain.

It belongs to the UPF0735 family.

The chain is UPF0735 ACT domain-containing protein Bsph_3944 from Lysinibacillus sphaericus (strain C3-41).